Consider the following 236-residue polypeptide: C-&gt;U-editing enzyme APOBEC-1 (236 aa).

The CMP/dCMP-type deaminase domain occupies 10–134; that stretch reads GDPTLRRRIE…QRNRQGLRDL (125 aa). Histidine 61 lines the Zn(2+) pocket. The active-site Proton donor is the glutamate 63. Cysteine 93 and cysteine 96 together coordinate Zn(2+).

It belongs to the cytidine and deoxycytidylate deaminase family. As to quaternary structure, homodimer. Interacts with A1CF; form an mRNA editing complex. Interacts with RBM47; form an mRNA editing complex. Found in a complex with CELF2/CUGBP2 and A1CF. Interacts with HNRPAB. Interacts with SYNCRIP. Zn(2+) serves as cofactor.

It localises to the cytoplasm. Its subcellular location is the nucleus. It catalyses the reaction a cytidine in mRNA + H2O + H(+) = a uridine in mRNA + NH4(+). The enzyme catalyses cytidine(6666) in apoB mRNA + H2O + H(+) = uridine(6666) in apoB mRNA + NH4(+). Cytidine deaminase catalyzing the cytidine to uridine postranscriptional editing of a variety of mRNAs. Form complexes with cofactors that confer differential editing activity and selectivity. Responsible for the postranscriptional editing of a CAA codon for Gln to a UAA codon for stop in the apolipoprotein B mRNA. Also involved in CGA (Arg) to UGA (Stop) editing in the NF1 mRNA. May also play a role in the epigenetic regulation of gene expression by participating in DNA demethylation. In Pongo pygmaeus (Bornean orangutan), this protein is C-&gt;U-editing enzyme APOBEC-1.